The primary structure comprises 645 residues: Threonine--tRNA ligase (645 aa).

One can recognise a TGS domain in the interval 1–63 (MNQINIQFPD…EQDGAIEIIT (63 aa)). The tract at residues 242 to 540 (DHRKIGKDLE…LTEETKGAFP (299 aa)) is catalytic. Zn(2+) is bound by residues Cys336, His387, and His517.

This sequence belongs to the class-II aminoacyl-tRNA synthetase family. As to quaternary structure, homodimer. Zn(2+) serves as cofactor.

It localises to the cytoplasm. It carries out the reaction tRNA(Thr) + L-threonine + ATP = L-threonyl-tRNA(Thr) + AMP + diphosphate + H(+). In terms of biological role, catalyzes the attachment of threonine to tRNA(Thr) in a two-step reaction: L-threonine is first activated by ATP to form Thr-AMP and then transferred to the acceptor end of tRNA(Thr). Also edits incorrectly charged L-seryl-tRNA(Thr). The polypeptide is Threonine--tRNA ligase (Staphylococcus epidermidis (strain ATCC 35984 / DSM 28319 / BCRC 17069 / CCUG 31568 / BM 3577 / RP62A)).